The sequence spans 252 residues: Imidazole glycerol phosphate synthase subunit HisF (252 aa).

Active-site residues include aspartate 11 and aspartate 130.

It belongs to the HisA/HisF family. Heterodimer of HisH and HisF.

It is found in the cytoplasm. It catalyses the reaction 5-[(5-phospho-1-deoxy-D-ribulos-1-ylimino)methylamino]-1-(5-phospho-beta-D-ribosyl)imidazole-4-carboxamide + L-glutamine = D-erythro-1-(imidazol-4-yl)glycerol 3-phosphate + 5-amino-1-(5-phospho-beta-D-ribosyl)imidazole-4-carboxamide + L-glutamate + H(+). It participates in amino-acid biosynthesis; L-histidine biosynthesis; L-histidine from 5-phospho-alpha-D-ribose 1-diphosphate: step 5/9. IGPS catalyzes the conversion of PRFAR and glutamine to IGP, AICAR and glutamate. The HisF subunit catalyzes the cyclization activity that produces IGP and AICAR from PRFAR using the ammonia provided by the HisH subunit. This is Imidazole glycerol phosphate synthase subunit HisF from Moorella thermoacetica (strain ATCC 39073 / JCM 9320).